The primary structure comprises 57 residues: UPF0057 membrane protein T23F2.4 (57 aa).

A run of 2 helical transmembrane segments spans residues 3 to 23 (ITCM…VGVF) and 36 to 56 (ILLT…IILA).

The protein belongs to the UPF0057 (PMP3) family.

It is found in the membrane. The protein is UPF0057 membrane protein T23F2.4 of Caenorhabditis elegans.